The sequence spans 317 residues: L-lactate dehydrogenase 1 (317 aa).

NAD(+)-binding positions include valine 17, aspartate 38, lysine 43, tyrosine 69, and 83-84; that span reads GA. Substrate is bound by residues glutamine 86 and arginine 92. Residues serine 105, 122–124, and serine 147 each bind NAD(+); that span reads ATN. 124–127 contacts substrate; the sequence is NPVD. Position 152 to 155 (152 to 155) interacts with substrate; it reads DSAR. Histidine 179 (proton acceptor) is an active-site residue. Tyrosine 223 is subject to Phosphotyrosine. Threonine 232 serves as a coordination point for substrate.

The protein belongs to the LDH/MDH superfamily. LDH family. In terms of assembly, homotetramer.

Its subcellular location is the cytoplasm. The catalysed reaction is (S)-lactate + NAD(+) = pyruvate + NADH + H(+). Its pathway is fermentation; pyruvate fermentation to lactate; (S)-lactate from pyruvate: step 1/1. In terms of biological role, catalyzes the conversion of lactate to pyruvate (Potential). Appears to be the primary factor that allows S.aureus growth during nitrosative stress in both aerobically and anaerobically cultured cells. This is L-lactate dehydrogenase 1 from Staphylococcus aureus (strain MRSA252).